The chain runs to 437 residues: Zinc finger CCCH domain-containing protein 40 (437 aa).

The segment at 6 to 33 (MYKTKLCILFNKTGDCSRPNCTFAHGNA) adopts a C3H1-type zinc-finger fold. A disordered region spans residues 35–107 (LRRPGESSFT…MPFENRRDKD (73 aa)). Basic and acidic residues predominate over residues 48-85 (HNMDSDLRDRRHNMDSDLRDRLGRQFSPERRPSLDRSG). A coiled-coil region spans residues 145–244 (NNVLEEQLKD…LGNQLSTYLA (100 aa)). Position 259 is a phosphoserine (Ser-259). Disordered regions lie at residues 266–360 (RNLR…RRRF) and 380–437 (EFDD…DDSV). Over residues 307 to 319 (RGEEEKVENEKKR) the composition is skewed to basic and acidic residues. 2 stretches are compositionally biased toward acidic residues: residues 333-343 (EEESGAWNDED) and 383-392 (DVAESEEENP). The segment covering 426-437 (MEQKKAYDDDSV) has biased composition (basic and acidic residues).

The chain is Zinc finger CCCH domain-containing protein 40 from Arabidopsis thaliana (Mouse-ear cress).